Here is a 38-residue protein sequence, read N- to C-terminus: Large ribosomal subunit protein bL36 (38 aa).

The protein belongs to the bacterial ribosomal protein bL36 family.

The chain is Large ribosomal subunit protein bL36 from Flavobacterium psychrophilum (strain ATCC 49511 / DSM 21280 / CIP 103535 / JIP02/86).